The chain runs to 485 residues: UDP-N-acetylmuramate--L-alanine ligase (485 aa).

120-126 (GSHGKTT) serves as a coordination point for ATP.

It belongs to the MurCDEF family.

The protein localises to the cytoplasm. The enzyme catalyses UDP-N-acetyl-alpha-D-muramate + L-alanine + ATP = UDP-N-acetyl-alpha-D-muramoyl-L-alanine + ADP + phosphate + H(+). It functions in the pathway cell wall biogenesis; peptidoglycan biosynthesis. Functionally, cell wall formation. This is UDP-N-acetylmuramate--L-alanine ligase from Rickettsia conorii (strain ATCC VR-613 / Malish 7).